Reading from the N-terminus, the 478-residue chain is BTB/POZ domain-containing protein 17 (478 aa).

A signal peptide spans 1 to 28; it reads MLRKGSCKPGSWGSFWAILALVGLVTRA. 4 N-linked (GlcNAc...) asparagine glycosylation sites follow: N61, N100, N195, and N307. One can recognise a BTB domain in the interval 63-132; it reads SDVILRVQAV…LYCGELTVLL (70 aa). Residues 169–269 enclose the BACK domain; the sequence is AVGWYHYAVS…IPPAQLFQLQ (101 aa).

Its subcellular location is the secreted. In Mus musculus (Mouse), this protein is BTB/POZ domain-containing protein 17 (Btbd17).